The sequence spans 212 residues: MGTNKPVVIGIAGGSGSGKTSVTKAIFDHFKGHSILILEQDYYYKDQSHLPMEERLKTNYDHPLAFDNDLLIEHLQQLLAYKQVEKPVYDYTLHTRSDEIIPVEPKDVIILEGILILEDPRLCELMDIKLFVDTDADLRILRRMQRDIKERGRTMDSVIDQYVNVVRPMHNQFIEPSKKFADIIIPEGGQNHVAIDIMVTKIATILEQKVNL.

13–20 (GGSGSGKT) lines the ATP pocket.

It belongs to the uridine kinase family.

Its subcellular location is the cytoplasm. It carries out the reaction uridine + ATP = UMP + ADP + H(+). The catalysed reaction is cytidine + ATP = CMP + ADP + H(+). Its pathway is pyrimidine metabolism; CTP biosynthesis via salvage pathway; CTP from cytidine: step 1/3. It participates in pyrimidine metabolism; UMP biosynthesis via salvage pathway; UMP from uridine: step 1/1. This Bacillus cereus (strain ATCC 10987 / NRS 248) protein is Uridine kinase.